Consider the following 306-residue polypeptide: Methionyl-tRNA formyltransferase (306 aa).

110–113 (SLLP) provides a ligand contact to (6S)-5,6,7,8-tetrahydrofolate.

Belongs to the Fmt family.

It catalyses the reaction L-methionyl-tRNA(fMet) + (6R)-10-formyltetrahydrofolate = N-formyl-L-methionyl-tRNA(fMet) + (6S)-5,6,7,8-tetrahydrofolate + H(+). Functionally, attaches a formyl group to the free amino group of methionyl-tRNA(fMet). The formyl group appears to play a dual role in the initiator identity of N-formylmethionyl-tRNA by promoting its recognition by IF2 and preventing the misappropriation of this tRNA by the elongation apparatus. This is Methionyl-tRNA formyltransferase from Brucella ovis (strain ATCC 25840 / 63/290 / NCTC 10512).